The sequence spans 131 residues: Large-conductance mechanosensitive channel (131 aa).

A run of 2 helical transmembrane segments spans residues 14-34 (VIDL…VTSL) and 67-87 (GSFI…FIFI).

It belongs to the MscL family. In terms of assembly, homopentamer.

Its subcellular location is the cell membrane. Functionally, channel that opens in response to stretch forces in the membrane lipid bilayer. May participate in the regulation of osmotic pressure changes within the cell. The sequence is that of Large-conductance mechanosensitive channel from Bacillus pumilus (strain SAFR-032).